Consider the following 104-residue polypeptide: Pyrimidine/purine nucleoside phosphorylase (104 aa).

Belongs to the nucleoside phosphorylase PpnP family.

It catalyses the reaction a purine D-ribonucleoside + phosphate = a purine nucleobase + alpha-D-ribose 1-phosphate. The catalysed reaction is adenosine + phosphate = alpha-D-ribose 1-phosphate + adenine. The enzyme catalyses cytidine + phosphate = cytosine + alpha-D-ribose 1-phosphate. It carries out the reaction guanosine + phosphate = alpha-D-ribose 1-phosphate + guanine. It catalyses the reaction inosine + phosphate = alpha-D-ribose 1-phosphate + hypoxanthine. The catalysed reaction is thymidine + phosphate = 2-deoxy-alpha-D-ribose 1-phosphate + thymine. The enzyme catalyses uridine + phosphate = alpha-D-ribose 1-phosphate + uracil. It carries out the reaction xanthosine + phosphate = alpha-D-ribose 1-phosphate + xanthine. Functionally, catalyzes the phosphorolysis of diverse nucleosides, yielding D-ribose 1-phosphate and the respective free bases. Can use uridine, adenosine, guanosine, cytidine, thymidine, inosine and xanthosine as substrates. Also catalyzes the reverse reactions. In Geotalea daltonii (strain DSM 22248 / JCM 15807 / FRC-32) (Geobacter daltonii), this protein is Pyrimidine/purine nucleoside phosphorylase.